Consider the following 326-residue polypeptide: PDZ domain-containing protein MAGIX (326 aa).

The disordered stretch occupies residues 1 to 32; that stretch reads MDSHAGNTADPRGSRRGVGLQGSGSPRARQLL. Residues 128–212 enclose the PDZ domain; sequence SVELVRGPAG…RLCLVLQRPQ (85 aa). A disordered region spans residues 214-267; the sequence is MNGSRSKEVGGGHQKTDRIPDPRGGRMMESRGTISPVHHRPKTRTGPGPSPESV. Over residues 218–242 the composition is skewed to basic and acidic residues; it reads RSKEVGGGHQKTDRIPDPRGGRMME. Phosphoserine is present on serine 263.

This Rattus norvegicus (Rat) protein is PDZ domain-containing protein MAGIX (Magix).